The following is a 331-amino-acid chain: Fructose-1,6-bisphosphatase class 1 2 (331 aa).

E80, D98, L100, and D101 together coordinate Mg(2+). Substrate is bound by residues 101-104 (DGSS) and N189. A Mg(2+)-binding site is contributed by E261.

It belongs to the FBPase class 1 family. In terms of assembly, homotetramer. Requires Mg(2+) as cofactor.

It is found in the cytoplasm. The catalysed reaction is beta-D-fructose 1,6-bisphosphate + H2O = beta-D-fructose 6-phosphate + phosphate. It participates in carbohydrate biosynthesis; Calvin cycle. The protein is Fructose-1,6-bisphosphatase class 1 2 of Cereibacter sphaeroides (strain ATCC 17023 / DSM 158 / JCM 6121 / CCUG 31486 / LMG 2827 / NBRC 12203 / NCIMB 8253 / ATH 2.4.1.) (Rhodobacter sphaeroides).